The primary structure comprises 207 residues: Thiamine-phosphate synthase (207 aa).

4-amino-2-methyl-5-(diphosphooxymethyl)pyrimidine contacts are provided by residues 36–40 (QLRMK) and N68. Mg(2+) contacts are provided by D69 and D88. S106 is a binding site for 4-amino-2-methyl-5-(diphosphooxymethyl)pyrimidine. 132–134 (TNT) provides a ligand contact to 2-[(2R,5Z)-2-carboxy-4-methylthiazol-5(2H)-ylidene]ethyl phosphate. K135 contacts 4-amino-2-methyl-5-(diphosphooxymethyl)pyrimidine. 2-[(2R,5Z)-2-carboxy-4-methylthiazol-5(2H)-ylidene]ethyl phosphate-binding positions include G162 and 182 to 183 (VS).

Belongs to the thiamine-phosphate synthase family. It depends on Mg(2+) as a cofactor.

It carries out the reaction 2-[(2R,5Z)-2-carboxy-4-methylthiazol-5(2H)-ylidene]ethyl phosphate + 4-amino-2-methyl-5-(diphosphooxymethyl)pyrimidine + 2 H(+) = thiamine phosphate + CO2 + diphosphate. The catalysed reaction is 2-(2-carboxy-4-methylthiazol-5-yl)ethyl phosphate + 4-amino-2-methyl-5-(diphosphooxymethyl)pyrimidine + 2 H(+) = thiamine phosphate + CO2 + diphosphate. It catalyses the reaction 4-methyl-5-(2-phosphooxyethyl)-thiazole + 4-amino-2-methyl-5-(diphosphooxymethyl)pyrimidine + H(+) = thiamine phosphate + diphosphate. It functions in the pathway cofactor biosynthesis; thiamine diphosphate biosynthesis; thiamine phosphate from 4-amino-2-methyl-5-diphosphomethylpyrimidine and 4-methyl-5-(2-phosphoethyl)-thiazole: step 1/1. Condenses 4-methyl-5-(beta-hydroxyethyl)thiazole monophosphate (THZ-P) and 2-methyl-4-amino-5-hydroxymethyl pyrimidine pyrophosphate (HMP-PP) to form thiamine monophosphate (TMP). The sequence is that of Thiamine-phosphate synthase from Methanococcus maripaludis (strain C7 / ATCC BAA-1331).